Reading from the N-terminus, the 253-residue chain is Triosephosphate isomerase (253 aa).

Residue 9–11 participates in substrate binding; sequence NWK. Catalysis depends on histidine 95, which acts as the Electrophile. Residue glutamate 167 is the Proton acceptor of the active site. Substrate-binding positions include glycine 173, serine 213, and 234–235; that span reads GG. Serine 213 carries the phosphoserine modification.

The protein belongs to the triosephosphate isomerase family. In terms of assembly, homodimer.

It localises to the cytoplasm. It carries out the reaction D-glyceraldehyde 3-phosphate = dihydroxyacetone phosphate. The protein operates within carbohydrate biosynthesis; gluconeogenesis. Its pathway is carbohydrate degradation; glycolysis; D-glyceraldehyde 3-phosphate from glycerone phosphate: step 1/1. In terms of biological role, involved in the gluconeogenesis. Catalyzes stereospecifically the conversion of dihydroxyacetone phosphate (DHAP) to D-glyceraldehyde-3-phosphate (G3P). This Bacillus subtilis (strain 168) protein is Triosephosphate isomerase.